The sequence spans 169 residues: Secretory-abundant heat soluble protein 1 (169 aa).

Positions 1–19 (MSRAAVAIALLGCVVAAYG) are cleaved as a signal peptide. Positions 31 to 60 (EWTGKSWMGKWESTDRIENFDAFISALGLP) are SAHS-c1. Positions 75–103 (WKEGDHYHHQISVPDKNYKNDVNFKLNEE) are SAHS-c2. N-linked (GlcNAc...) asparagine glycosylation occurs at asparagine 109. Residues 116 to 165 (KYTEDGGNLKAEVHVPSRNKVIHDEYKVNGDELEKTYKVGDVTAKRWYKK) form an SAHS-c3 region.

The protein belongs to the Secretory-abundant heat soluble protein (SAHS) family.

Its subcellular location is the secreted. Functionally, secreted heat soluble protein acting as a molecular shield in water-deficient condition. Tardigrade-specific intrinsically disordered proteins (TDPs) are essential for desiccation tolerance by forming non-crystalline amorphous solids upon desiccation, and this vitrified state mirrors their protective capabilities. The polypeptide is Secretory-abundant heat soluble protein 1 (Ramazzottius varieornatus (Water bear)).